Reading from the N-terminus, the 443-residue chain is ATP-dependent protease ATPase subunit HslU (443 aa).

Residues I19, 61–66 (GVGKTE), D256, E321, and R393 each bind ATP.

The protein belongs to the ClpX chaperone family. HslU subfamily. In terms of assembly, a double ring-shaped homohexamer of HslV is capped on each side by a ring-shaped HslU homohexamer. The assembly of the HslU/HslV complex is dependent on binding of ATP.

The protein localises to the cytoplasm. ATPase subunit of a proteasome-like degradation complex; this subunit has chaperone activity. The binding of ATP and its subsequent hydrolysis by HslU are essential for unfolding of protein substrates subsequently hydrolyzed by HslV. HslU recognizes the N-terminal part of its protein substrates and unfolds these before they are guided to HslV for hydrolysis. The sequence is that of ATP-dependent protease ATPase subunit HslU from Ralstonia nicotianae (strain ATCC BAA-1114 / GMI1000) (Ralstonia solanacearum).